The chain runs to 525 residues: GMP synthase [glutamine-hydrolyzing] (525 aa).

A Glutamine amidotransferase type-1 domain is found at 7–207 (RILVIDFGSQ…ITCICRCKSS (201 aa)). Cysteine 84 serves as the catalytic Nucleophile. Active-site residues include histidine 181 and glutamate 183. The 193-residue stretch at 208–400 (WKIANIIDDI…LGIPYDIAYR (193 aa)) folds into the GMPS ATP-PPase domain. 235-241 (SGGIDSL) is a binding site for ATP.

As to quaternary structure, homodimer.

It carries out the reaction XMP + L-glutamine + ATP + H2O = GMP + L-glutamate + AMP + diphosphate + 2 H(+). It participates in purine metabolism; GMP biosynthesis; GMP from XMP (L-Gln route): step 1/1. Functionally, catalyzes the synthesis of GMP from XMP. The sequence is that of GMP synthase [glutamine-hydrolyzing] from Blochmanniella pennsylvanica (strain BPEN).